The primary structure comprises 523 residues: MRLARGIKYAVIGAGVALFGVLFGWVMFPAILKSQLKKEMALSKKTDVRKMWEKIPFALDFKIYLFNYTNPEEVQKGAAPIVKEVGPYYFEEWKEKVEIEDHEEDDTITYRKMDTFYFRPELSGPGLTGEETIIMPHVFMMSMAITVYRDKPSMMNMLGKAINGIFDNPSDVFMRVNAMDILFRGVIINCDRTEFAPKAACTAIKKEGAKSLIIEPNNQLRFSLFGLKNHTVDSRVVTVKRGIKNVMDVGQVVAMDGAPQLEIWNDHCNEYQGTDGTIFPPFLTQKDRLQSYSADLCRSFKPWFQKTTYYRGIKTNHYIANMGDFANDPELNCFCETPEKCPPKGLMDLTKCVKAPMYASMPHFLDADPQMLENVKGLNPDMNEHGIQIDFEPISGTPMMAKQRVQFNMELLRVEKIEIMKELPGYIVPLLWIEGGLALNKTFVKMLKNQLFIPKRIVSVIRWWLLSFGMLAALGGVIFHFKDDIMRIAIKGDSSVTKVNPEDGEQKDVSVIGQSHEPPKINM.

Topologically, residues 1–10 are cytoplasmic; sequence MRLARGIKYA. A helical transmembrane segment spans residues 11–31; the sequence is VIGAGVALFGVLFGWVMFPAI. Over 32–458 the chain is Extracellular; that stretch reads LKSQLKKEMA…NQLFIPKRIV (427 aa). 2 N-linked (GlcNAc...) asparagine glycosylation sites follow: Asn-67 and Asn-229. 3 cysteine pairs are disulfide-bonded: Cys-268–Cys-333, Cys-297–Cys-352, and Cys-335–Cys-341. An N-linked (GlcNAc...) asparagine glycan is attached at Asn-440. The chain crosses the membrane as a helical span at residues 459–479; that stretch reads SVIRWWLLSFGMLAALGGVIF. The Cytoplasmic portion of the chain corresponds to 480-523; that stretch reads HFKDDIMRIAIKGDSSVTKVNPEDGEQKDVSVIGQSHEPPKINM. Residues 499–523 form a disordered region; sequence VNPEDGEQKDVSVIGQSHEPPKINM.

This sequence belongs to the CD36 family. Localizes to both male and female antennae but not the leg, wing, gut, head, or thoracic ganglia. Detected throughout the sensory epithelium, associating with both sex-pheromone sensilla and plant-volatile sensilla. Differentially expressed both among different sensilla and different neurons within a given sensillum. Expression coincides with that of several other olfactory-specific proteins that are involved in odor detection.

It localises to the cell membrane. Functionally, plays an olfactory role that is not restricted to pheromone sensitivity. The chain is Sensory neuron membrane protein 1 from Manduca sexta (Tobacco hawkmoth).